A 363-amino-acid polypeptide reads, in one-letter code: Histone-lysine N-methyltransferase ASHH3 (363 aa).

Residues 63–114 (DDGIFCSCSSSSPGSSSTVCGSNCHCGMLFSSCSSSCKCGSECNNKPFQQRH) form the AWS domain. The region spanning 116–233 (KKMKLIQTEK…KGEHLTYDYQ (118 aa)) is the SET domain. In terms of domain architecture, Post-SET spans 239 to 255 (ADQDCHCGAVGCRRKLG).

It belongs to the class V-like SAM-binding methyltransferase superfamily. Histone-lysine methyltransferase family. SET2 subfamily.

Its subcellular location is the nucleus. The protein localises to the chromosome. It is found in the centromere. The catalysed reaction is L-lysyl-[histone] + S-adenosyl-L-methionine = N(6)-methyl-L-lysyl-[histone] + S-adenosyl-L-homocysteine + H(+). Its function is as follows. Histone methyltransferase. This Arabidopsis thaliana (Mouse-ear cress) protein is Histone-lysine N-methyltransferase ASHH3 (ASHH3).